Here is a 143-residue protein sequence, read N- to C-terminus: Large ribosomal subunit protein uL11 (143 aa).

It belongs to the universal ribosomal protein uL11 family. Part of the ribosomal stalk of the 50S ribosomal subunit. Interacts with L10 and the large rRNA to form the base of the stalk. L10 forms an elongated spine to which L12 dimers bind in a sequential fashion forming a multimeric L10(L12)X complex. One or more lysine residues are methylated.

Its function is as follows. Forms part of the ribosomal stalk which helps the ribosome interact with GTP-bound translation factors. The polypeptide is Large ribosomal subunit protein uL11 (Bordetella parapertussis (strain 12822 / ATCC BAA-587 / NCTC 13253)).